Consider the following 298-residue polypeptide: Chromatin modification-related protein YNG2 (298 aa).

The stretch at 20-86 (EVRHLLEEIK…KLVQKLQKEK (67 aa)) forms a coiled coil. Polar residues predominate over residues 140-158 (GFSDSASATPTPRNGSSAT). Positions 140-206 (GFSDSASATP…EEIEDPLPYE (67 aa)) are disordered. Low complexity predominate over residues 174 to 188 (VKGASSSSAQSSSAS). Residues 237-288 (NLYCFCQRVSFGEMIGCDNEDCKYEWFHWSCVGITSPPKDDEIWYCPDCASK) form a PHD-type zinc finger. Residues Cys-240, Cys-242, Cys-253, Cys-258, His-264, Cys-267, Cys-282, and Cys-285 each coordinate Zn(2+).

It belongs to the ING family. Interacts with H3K4me3 and to a lesser extent with H3K4me2. Component of the NuA4 histone acetyltransferase complex.

The protein resides in the nucleus. Functionally, component of the NuA4 histone acetyltransferase complex which is involved in transcriptional activation of selected genes principally by acetylation of nucleosomal histone H4 and H2A. The NuA4 complex is also involved in DNA repair. Involved in cell cycle progression and meiosis. This chain is Chromatin modification-related protein YNG2 (YNG2), found in Candida albicans (strain SC5314 / ATCC MYA-2876) (Yeast).